The chain runs to 315 residues: Transaldolase (315 aa).

K131 serves as the catalytic Schiff-base intermediate with substrate.

Belongs to the transaldolase family. Type 1 subfamily. Homodimer.

The protein resides in the cytoplasm. It carries out the reaction D-sedoheptulose 7-phosphate + D-glyceraldehyde 3-phosphate = D-erythrose 4-phosphate + beta-D-fructose 6-phosphate. Its pathway is carbohydrate degradation; pentose phosphate pathway; D-glyceraldehyde 3-phosphate and beta-D-fructose 6-phosphate from D-ribose 5-phosphate and D-xylulose 5-phosphate (non-oxidative stage): step 2/3. Transaldolase is important for the balance of metabolites in the pentose-phosphate pathway. This Actinobacillus pleuropneumoniae serotype 7 (strain AP76) protein is Transaldolase.